Reading from the N-terminus, the 440-residue chain is MKHFRDLDLSSYSLSSVSGFLPERPALERLPNPYYDHWEDLSRNLPQLVASDTLKDKLERLPILSTALLDSEEEWRRAYVVLSFLSQGYIWSGDQPRRNLPIAIAAPLRRVSEYLTIMPCGTFAAYCLWNVIPSPKFGNPQINPEDFISTCTFTGSKEEEWFYVISVAIEARGGRLIPKILDAIDAVKENDTPRVRSFLEAFITCVDGIILVLDRMGENLSQEFFYHRLRPYLRGGKNMAQVGLPDGIFYPLCQCEGGEGEWLAYSGGSNAQSSLIQLMDITLGTCQNVEFIKEMRNYMPGPHREFLELMTSVSNIRPYILSLGNDSDVRSLYDKAVLRLAALRDCHLRVVARYILIPAGKKNPSGHRQLQERGRGTGGTDIMKFLRETRNNTLSACCEQSKGSTVVQTYPKRCETCGSGPIDRTTLIKKATVVINEIEC.

Position 347 (His347) interacts with heme.

It belongs to the indoleamine 2,3-dioxygenase family. As to quaternary structure, monomer. Heme serves as cofactor.

The enzyme catalyses D-tryptophan + O2 = N-formyl-D-kynurenine. The catalysed reaction is L-tryptophan + O2 = N-formyl-L-kynurenine. Its pathway is secondary metabolite biosynthesis. Indoleamine 2,3-dioxygenase; part of the gene cluster that mediates the biosynthesis of quinolactacin A2 (QUL A2), a fungal alkaloid that features a quinolone-gamma-lactam hybrid, which is a potential pharmacophore for the treatment of cancer and Alzheimer's disease. The quinolone-gamma-lactam hybrid scaffold is synthesized from the combination of L-isoleucine (L-Ile) and the nonproteinogenic amino acid L-kynurenine, followed by quinolone cyclization, oxidative decarboxylation, and lactam formation. Additionally, the N-methyl group is derived from methionine, which might be catalyzed by an S-adenosylmethionine (SAM)-dependent methyltransferase. Bioconversion of L-tryptophan to L-kynurenine could be catalyzed by the indoleamine-2,3-dioxygenase (IDO) qulI to produce an unstable product, N-formyl-L-kynurenine, followed by kynurenine formamidase catalyzed hydrolysis. QulM then acts as a methyltransferase that methylates L-kynurenine at the N-4 position. The FMN-dependent alpha-hydroxy acid dehydrogenase qulF than functions as an oxidative decarboxylase which converts N-methylkynurenine into 2-aminobenzoylacetamide via 2 tandem reactions, including dehydrogenation and decarboxylation. An amidase located outside of the qul gene cluster further produces the unstable beta-keto acid precursor N-methyl-2-aminobenzoylacetate, which could be spontaneously dehydrated to form N-methyl-4-hydroxy-2-quinolone. The NRPS qulB is able to incorporate N-methyl-2-aminobenzoylacetate and efficiently compete with the spontaneous reaction. By further extending the beta-keto acid with L-Ile, qulA performs a Dieckmann condensation to form the gamma-lactam ring and release a 4-ketopyrrolidinone intermediate from the assembly line. This intermediate could plausibly further undergo a spontaneous cyclization to yield the final quinolone-gamma-lactam hybrid structure. This Penicillium citrinum protein is Indoleamine 2,3-dioxygenase qulI.